Here is a 107-residue protein sequence, read N- to C-terminus: Large ribosomal subunit protein eL33 (107 aa).

It belongs to the eukaryotic ribosomal protein eL33 family. As to quaternary structure, component of the large ribosomal subunit. Mature ribosomes consist of a small (40S) and a large (60S) subunit. The 40S subunit contains about 32 different proteins and 1 molecule of RNA (18S). The 60S subunit contains 45 different proteins and 3 molecules of RNA (25S, 5.8S and 5S).

The protein resides in the cytoplasm. In terms of biological role, component of the ribosome, a large ribonucleoprotein complex responsible for the synthesis of proteins in the cell. The small ribosomal subunit (SSU) binds messenger RNAs (mRNAs) and translates the encoded message by selecting cognate aminoacyl-transfer RNA (tRNA) molecules. The large subunit (LSU) contains the ribosomal catalytic site termed the peptidyl transferase center (PTC), which catalyzes the formation of peptide bonds, thereby polymerizing the amino acids delivered by tRNAs into a polypeptide chain. The nascent polypeptides leave the ribosome through a tunnel in the LSU and interact with protein factors that function in enzymatic processing, targeting, and the membrane insertion of nascent chains at the exit of the ribosomal tunnel. This chain is Large ribosomal subunit protein eL33, found in Candida albicans (strain SC5314 / ATCC MYA-2876) (Yeast).